Reading from the N-terminus, the 492-residue chain is MQSNTDSSGTSGTYSQTVGLLYVFNLIVGTGALALPKAFQSAGWLLSISLLTFSAFMSYVAATFVIEALSVANAVLSKKRRVEYDDVVVADGPSTFEIAKKVEVSEMASMFLSKVSLVFSYFAIIIYLFGDLAIYSTTVPKSAMNIVCSTINATIVKSSDPCHESWPEILTRMTVYRFFVIVFVVVVCLPMVIAGITKTRHIQIMTTLSRWAAFILMISLATMQLSSQGAAAHPPAYNFHGFGSLFGCAVYAFMCHHSIPSLITPMRTKENVFGKIAVVYGIVGVFYFTLSLTGAFAFEHVQDIYTLNFLHDDNTSLVYSIIDYFLALFPIITLTSSYPIIALTLINNFKVVKDILCPKTGQENESLLEADNQVEDNDTDDEREARNGNPKTIFDVLVPTLVLALPTFLSLLTDDMLLLASITGSFPGVAVQFAIPCLLVTAARKHARSVLNFPVPRKNNSPFQSRFWIMLISSWAGFSMIMVLLNLVGVKF.

The Cytoplasmic portion of the chain corresponds to 1 to 18 (MQSNTDSSGTSGTYSQTV). The helical transmembrane segment at 19 to 39 (GLLYVFNLIVGTGALALPKAF) threads the bilayer. Topologically, residues 40 to 45 (QSAGWL) are extracellular. Residues 46-66 (LSISLLTFSAFMSYVAATFVI) form a helical membrane-spanning segment. The Cytoplasmic segment spans residues 67–114 (EALSVANAVLSKKRRVEYDDVVVADGPSTFEIAKKVEVSEMASMFLSK). Residues 115–135 (VSLVFSYFAIIIYLFGDLAIY) form a helical membrane-spanning segment. The Extracellular segment spans residues 136–177 (STTVPKSAMNIVCSTINATIVKSSDPCHESWPEILTRMTVYR). N152 carries an N-linked (GlcNAc...) asparagine glycan. The chain crosses the membrane as a helical span at residues 178–198 (FFVIVFVVVVCLPMVIAGITK). Residues 199-210 (TRHIQIMTTLSR) are Cytoplasmic-facing. Residues 211-231 (WAAFILMISLATMQLSSQGAA) traverse the membrane as a helical segment. Residues 232 to 238 (AHPPAYN) lie on the Extracellular side of the membrane. Residues 239-259 (FHGFGSLFGCAVYAFMCHHSI) traverse the membrane as a helical segment. The Cytoplasmic portion of the chain corresponds to 260-275 (PSLITPMRTKENVFGK). Residues 276 to 296 (IAVVYGIVGVFYFTLSLTGAF) form a helical membrane-spanning segment. At 297-325 (AFEHVQDIYTLNFLHDDNTSLVYSIIDYF) the chain is on the extracellular side. N314 is a glycosylation site (N-linked (GlcNAc...) asparagine). The chain crosses the membrane as a helical span at residues 326–346 (LALFPIITLTSSYPIIALTLI). The Cytoplasmic segment spans residues 347-391 (NNFKVVKDILCPKTGQENESLLEADNQVEDNDTDDEREARNGNPK). Residues 367 to 382 (LLEADNQVEDNDTDDE) are compositionally biased toward acidic residues. Residues 367 to 387 (LLEADNQVEDNDTDDEREARN) form a disordered region. Residues 392–412 (TIFDVLVPTLVLALPTFLSLL) traverse the membrane as a helical segment. Topologically, residues 413 to 415 (TDD) are extracellular. The helical transmembrane segment at 416–436 (MLLLASITGSFPGVAVQFAIP) threads the bilayer. Topologically, residues 437–466 (CLLVTAARKHARSVLNFPVPRKNNSPFQSR) are cytoplasmic. The chain crosses the membrane as a helical span at residues 467-487 (FWIMLISSWAGFSMIMVLLNL). Topologically, residues 488-492 (VGVKF) are extracellular.

Belongs to the TMEM104 family.

The protein resides in the membrane. This Caenorhabditis briggsae protein is Transmembrane protein 104 homolog.